The chain runs to 141 residues: Hemoglobin subunit alpha (141 aa).

The region spanning 1-141 (VLSPADKSNV…VSTVLTSKYR (141 aa)) is the Globin domain. At serine 3 the chain carries Phosphoserine. N6-succinyllysine occurs at positions 7 and 11. Lysine 16 carries the post-translational modification N6-acetyllysine; alternate. Position 16 is an N6-succinyllysine; alternate (lysine 16). Tyrosine 24 is modified (phosphotyrosine). Serine 35 is subject to Phosphoserine. Residue lysine 40 is modified to N6-succinyllysine. The residue at position 49 (serine 49) is a Phosphoserine. An O2-binding site is contributed by histidine 58. Histidine 87 contacts heme b. Serine 102 carries the post-translational modification Phosphoserine. A Phosphothreonine modification is found at threonine 108. Phosphoserine occurs at positions 124 and 131. Threonine 134 and threonine 137 each carry phosphothreonine. Residue serine 138 is modified to Phosphoserine.

It belongs to the globin family. In terms of assembly, heterotetramer of two alpha chains and two beta chains. As to expression, red blood cells.

Involved in oxygen transport from the lung to the various peripheral tissues. Its function is as follows. Hemopressin acts as an antagonist peptide of the cannabinoid receptor CNR1. Hemopressin-binding efficiently blocks cannabinoid receptor CNR1 and subsequent signaling. The sequence is that of Hemoglobin subunit alpha (HBA) from Saguinus oedipus (Cotton-top tamarin).